Here is an 812-residue protein sequence, read N- to C-terminus: Leucine--tRNA ligase (812 aa).

The 'HIGH' region motif lies at 40-51 (SYPSGSNLHAGH). The 'KMSKS' region signature appears at 572 to 576 (KMSKS). An ATP-binding site is contributed by K575.

It belongs to the class-I aminoacyl-tRNA synthetase family.

It localises to the cytoplasm. The enzyme catalyses tRNA(Leu) + L-leucine + ATP = L-leucyl-tRNA(Leu) + AMP + diphosphate. The sequence is that of Leucine--tRNA ligase from Clostridium tetani (strain Massachusetts / E88).